Consider the following 1338-residue polypeptide: Aldehyde oxidase (1338 aa).

Residues 5-92 (SELLFYVNGR…GAAVTTVEGI (88 aa)) enclose the 2Fe-2S ferredoxin-type domain. [2Fe-2S] cluster contacts are provided by C44, C49, C52, and C74. Q113 contributes to the Mo-molybdopterin binding site. [2Fe-2S] cluster contacts are provided by C114, C117, C149, and C151. Residue C151 participates in Mo-molybdopterin binding. Residues 236–421 (FGSERMMWFS…VSVNIPYSRK (186 aa)) enclose the FAD-binding PCMH-type domain. FAD is bound by residues 264 to 271 (VIMGNTSV), A345, S354, H358, D367, and L411. Mo-molybdopterin-binding positions include 806–807 (AF) and M1047. S1068 carries the post-translational modification Phosphoserine. Mo-molybdopterin contacts are provided by residues 1088–1091 (GSVV), Q1203, and L1268. Catalysis depends on E1270, which acts as the Proton acceptor; for azaheterocycle hydroxylase activity.

Belongs to the xanthine dehydrogenase family. Homodimer. Requires [2Fe-2S] cluster as cofactor. FAD is required as a cofactor. Mo-molybdopterin serves as cofactor. As to expression, abundant in liver, expressed in adipose tissue and at lower levels in lung, skeletal muscle, pancreas. In contrast to mice, no significant gender difference in AOX1 expression level (at protein level).

It is found in the cytoplasm. The catalysed reaction is an aldehyde + O2 + H2O = a carboxylate + H2O2 + H(+). It catalyses the reaction retinal + O2 + H2O = retinoate + H2O2 + H(+). With respect to regulation, is very potently inhibited by raloxifene. Also inhibited by estradiol, ethinyl estradiol, hydralazine, menadione, isovanillin and thioridazine. Not inhibited by allopurinol, a xanthine dehydrogenase potent inhibitor. Oxidase with broad substrate specificity, oxidizing aromatic azaheterocycles, such as N1-methylnicotinamide, N-methylphthalazinium and phthalazine, as well as aldehydes, such as benzaldehyde, retinal, pyridoxal, and vanillin. Plays a key role in the metabolism of xenobiotics and drugs containing aromatic azaheterocyclic substituents. Participates in the bioactivation of prodrugs such as famciclovir, catalyzing the oxidation step from 6-deoxypenciclovir to penciclovir, which is a potent antiviral agent. Is probably involved in the regulation of reactive oxygen species homeostasis. May be a prominent source of superoxide generation via the one-electron reduction of molecular oxygen. May also catalyze nitric oxide (NO) production via the reduction of nitrite to NO with NADH or aldehyde as electron donor. May play a role in adipogenesis. The sequence is that of Aldehyde oxidase from Homo sapiens (Human).